A 155-amino-acid chain; its full sequence is Cyanate hydratase (155 aa).

Active-site residues include arginine 101, glutamate 104, and serine 127.

Belongs to the cyanase family.

The catalysed reaction is cyanate + hydrogencarbonate + 3 H(+) = NH4(+) + 2 CO2. Functionally, catalyzes the reaction of cyanate with bicarbonate to produce ammonia and carbon dioxide. The chain is Cyanate hydratase from Coccidioides posadasii (strain C735) (Valley fever fungus).